Here is a 45-residue protein sequence, read N- to C-terminus: MEAVLLLAKLPEAFSVFSPIVDVMPVIPLFFLALAFVWQAAVGFK.

A propeptide spanning residues 1–8 (MEAVLLLA) is cleaved from the precursor. A helical membrane pass occupies residues 24 to 44 (MPVIPLFFLALAFVWQAAVGF).

The protein belongs to the PsbK family. In terms of assembly, PSII is composed of 1 copy each of membrane proteins PsbA, PsbB, PsbC, PsbD, PsbE, PsbF, PsbH, PsbI, PsbJ, PsbK, PsbL, PsbM, PsbT, PsbX, PsbY, PsbZ, Psb30/Ycf12, peripheral proteins PsbO, CyanoQ (PsbQ), PsbU, PsbV and a large number of cofactors. It forms dimeric complexes.

The protein localises to the cellular thylakoid membrane. One of the components of the core complex of photosystem II (PSII). PSII is a light-driven water:plastoquinone oxidoreductase that uses light energy to abstract electrons from H(2)O, generating O(2) and a proton gradient subsequently used for ATP formation. It consists of a core antenna complex that captures photons, and an electron transfer chain that converts photonic excitation into a charge separation. In Acaryochloris marina (strain MBIC 11017), this protein is Photosystem II reaction center protein K.